The chain runs to 438 residues: MSHEEDLIDYSDEELQTTDAAATTAAPAANGAPAKTGDLTVTGGRSDKKGSYVGIHSTGFRDFLLKGELLRAITDCGFEHPSEVCIPTAILNVDVLCQAKSGLGKTAVFVLTTLHQLEPVPGECSVLVMCHTRELAYQIKNEYARFSKYLPDVKTAVFYGGTPIQKDIEVLSNKESYPNIVVGTPGRLNALVREKKLSLRNVKAFVLDECDKMLDQIDMRRDVQEIFRATPADKQVMMFSATLSQEIRPICKKFMRNPLEVYVDDDTKLTLHGLQQYYIKLSESEKNRKLNDLLDNLEFNQVIIFVKSTQRANELDKLLRECNFPSIAVHSGVSQEERIKRYKEFKEFNKRICVATDVFGRGIDIERINLAINYDLPADADSYLHRVGRAGRFGTKGLSISFVSSEDDEKVLKDIEKRFEVALPEYPEGGVDSSTYMA.

A compositionally biased stretch (low complexity) spans 23–36; sequence TTAAPAANGAPAKT. The segment at 23 to 42 is disordered; the sequence is TTAAPAANGAPAKTGDLTVT. The short motif at 58 to 86 is the Q motif element; it reads TGFRDFLLKGELLRAITDCGFEHPSEVCI. The Helicase ATP-binding domain maps to 86 to 261; sequence IPTAILNVDV…KKFMRNPLEV (176 aa). Residue 99–106 participates in ATP binding; that stretch reads AKSGLGKT. Positions 208–211 match the DEAD box motif; that stretch reads DECD. The region spanning 289–434 is the Helicase C-terminal domain; that stretch reads KLNDLLDNLE…EYPEGGVDSS (146 aa).

It belongs to the DEAD box helicase family. DECD subfamily.

Its subcellular location is the nucleus. The enzyme catalyses ATP + H2O = ADP + phosphate + H(+). Functionally, ATP-binding RNA helicase involved in transcription elongation and required for the export of mRNA out of the nucleus. SUB2 also plays a role in pre-mRNA splicing and spliceosome assembly. May be involved in rDNA and telomeric silencing, and maintenance of genome integrity. This Aspergillus terreus (strain NIH 2624 / FGSC A1156) protein is ATP-dependent RNA helicase sub2 (sub2).